Here is an 88-residue protein sequence, read N- to C-terminus: ATP synthase F(0) complex subunit f, mitochondrial (88 aa).

The residue at position 2 (Ala-2) is an N-acetylalanine. Ser-3 bears the Phosphoserine mark. Residue Lys-16 is modified to N6-acetyllysine. A helical membrane pass occupies residues 62 to 79; sequence MVLAAYVFLNYCRSYKEL.

In terms of assembly, component of the ATP synthase complex composed at least of ATP5F1A/subunit alpha, ATP5F1B/subunit beta, ATP5MC1/subunit c (homooctomer), MT-ATP6/subunit a, MT-ATP8/subunit 8, ATP5ME/subunit e, ATP5MF/subunit f, ATP5MG/subunit g, ATP5MK/subunit k, ATP5MJ/subunit j, ATP5F1C/subunit gamma, ATP5F1D/subunit delta, ATP5F1E/subunit epsilon, ATP5PF/subunit F6, ATP5PB/subunit b, ATP5PD/subunit d, ATP5PO/subunit OSCP. ATP synthase complex consists of a soluble F(1) head domain (subunits alpha(3) and beta(3)) - the catalytic core - and a membrane F(0) domain - the membrane proton channel (subunits c, a, 8, e, f, g, k and j). These two domains are linked by a central stalk (subunits gamma, delta, and epsilon) rotating inside the F1 region and a stationary peripheral stalk (subunits F6, b, d, and OSCP).

It is found in the mitochondrion. It localises to the mitochondrion inner membrane. Subunit f, of the mitochondrial membrane ATP synthase complex (F(1)F(0) ATP synthase or Complex V) that produces ATP from ADP in the presence of a proton gradient across the membrane which is generated by electron transport complexes of the respiratory chain. ATP synthase complex consist of a soluble F(1) head domain - the catalytic core - and a membrane F(1) domain - the membrane proton channel. These two domains are linked by a central stalk rotating inside the F(1) region and a stationary peripheral stalk. During catalysis, ATP synthesis in the catalytic domain of F(1) is coupled via a rotary mechanism of the central stalk subunits to proton translocation. In vivo, can only synthesize ATP although its ATP hydrolase activity can be activated artificially in vitro. Part of the complex F(0) domain. The polypeptide is ATP synthase F(0) complex subunit f, mitochondrial (Bos taurus (Bovine)).